The following is a 280-amino-acid chain: MAIRKYKPTSPGRRGASVSDFSEVTRSTPEKSLVRPLHGHGGRNAHGRITTRHKGGGHKRAYRVIDFRRNDKDGVNAKVAHIEYDPNRTANIALLHFLDGEKRYIIAPQGLSQGDVVESGPNADIKPGNNLPLRNIPAGTVIHAVELRPGGGAKLARSAGSSIQLLGKEGSYASLRMPSGEIRRVDVRCRATVGEVGNAEQANINWGKAGRMRWKGKRPSVRGVVMNPVDHPHGGGEGKTSGGRHPVSPWGKPEGRTRHPNKASNKLIVRRRRTGKKHGR.

Disordered stretches follow at residues 1-58 (MAIR…GGGH) and 226-280 (MNPV…KHGR). Composition is skewed to basic residues over residues 37–58 (LHGH…GGGH) and 268–280 (IVRR…KHGR).

The protein belongs to the universal ribosomal protein uL2 family. In terms of assembly, part of the 50S ribosomal subunit. Forms a bridge to the 30S subunit in the 70S ribosome.

Functionally, one of the primary rRNA binding proteins. Required for association of the 30S and 50S subunits to form the 70S ribosome, for tRNA binding and peptide bond formation. It has been suggested to have peptidyltransferase activity; this is somewhat controversial. Makes several contacts with the 16S rRNA in the 70S ribosome. This is Large ribosomal subunit protein uL2 from Mycobacterium avium (strain 104).